Here is a 330-residue protein sequence, read N- to C-terminus: Lipoyl synthase (330 aa).

Positions 1–31 are disordered; that stretch reads MSDAPIATSSEVTQSPADYDPTKKQKSAEKT. Residues 7-16 are compositionally biased toward polar residues; sequence ATSSEVTQSP. A compositionally biased stretch (basic and acidic residues) spans 20–31; it reads DPTKKQKSAEKT. [4Fe-4S] cluster is bound by residues Cys77, Cys82, Cys88, Cys103, Cys107, Cys110, and Ser317. A Radical SAM core domain is found at 88-306; the sequence is CFGKGTATFM…EEEAYKMGFT (219 aa).

The protein belongs to the radical SAM superfamily. Lipoyl synthase family. It depends on [4Fe-4S] cluster as a cofactor.

It is found in the cytoplasm. It catalyses the reaction [[Fe-S] cluster scaffold protein carrying a second [4Fe-4S](2+) cluster] + N(6)-octanoyl-L-lysyl-[protein] + 2 oxidized [2Fe-2S]-[ferredoxin] + 2 S-adenosyl-L-methionine + 4 H(+) = [[Fe-S] cluster scaffold protein] + N(6)-[(R)-dihydrolipoyl]-L-lysyl-[protein] + 4 Fe(3+) + 2 hydrogen sulfide + 2 5'-deoxyadenosine + 2 L-methionine + 2 reduced [2Fe-2S]-[ferredoxin]. The protein operates within protein modification; protein lipoylation via endogenous pathway; protein N(6)-(lipoyl)lysine from octanoyl-[acyl-carrier-protein]: step 2/2. Its function is as follows. Catalyzes the radical-mediated insertion of two sulfur atoms into the C-6 and C-8 positions of the octanoyl moiety bound to the lipoyl domains of lipoate-dependent enzymes, thereby converting the octanoylated domains into lipoylated derivatives. The sequence is that of Lipoyl synthase from Cupriavidus metallidurans (strain ATCC 43123 / DSM 2839 / NBRC 102507 / CH34) (Ralstonia metallidurans).